The chain runs to 860 residues: MTEYTPMIKQYLEIKDKYQDAFLFFRLGDFYEMFFEDALNASQILEITLTGREGGTKEKIPMCGVPYHSASGYIDTLIEKGYKVAICEQVEDPKTTKGMVKREVVQLISPGTVMDERGLKAKENNYIASLYCYEGKEYGFAYSDLSTGELKSTVIEASEDRLINELTTLSTRELIVSSSEKEVLSDVMKEQLGLTFSVHEEDTIPVENEKLVTRHMSLSEKRAIGKLLHYLKETQKRDLGHLQQAVHYETSNYMKMDYYSKRNLELAESIRGKGRQGTLLWLLDNTQTAMGGRMLKQWIDRPLIDRKKIIDRQNDVSELMAHFFERLELVENLKNVYDLERLAGRVAYGNVNARDLIQLRNSLYQIPRIRATLLSMSSESLTELANQLDPCEELTEKLEEAIMDSAPISIREGGIIKDGYNSQLDTYRDASRNGKTWIAELERKERELTGIKTMKVGFNRVFGYYIEVTRANTHLLPEGRYERKQTLTNAERYITPELKEKEKLILDAEEKSMELEYQLFSEVREMVKDYIERLQKLAKSVSEIDCLQSFADISEKNHFIRPTLSEDGSLHVKQGRHPVVEKVMGAQSYVANDCVLDENREILLITGPNMSGKSTYMRQVALTAICAQVGCFVPAEEAILPIFDQIFTRIGAADDLIAGQSTFMVEMLEARNAIVHATKDSLILFDEIGRGTATYDGMALAQAIIEYIHENVHAKTLFSTHYHELTDLEKELSGLQNIHVSAVEENGKVVFLHKIKEGPADKSYGIHVAELAELPKSLIERASRILEQLENDDKKIIIASVKQPEEVHEEVQLSMFPVEPEKKASSKETKLLKEIASMNIMQMTPMDAMNKLYELQSKIH.

Residue 607–614 (GPNMSGKS) participates in ATP binding.

Belongs to the DNA mismatch repair MutS family.

Functionally, this protein is involved in the repair of mismatches in DNA. It is possible that it carries out the mismatch recognition step. This protein has a weak ATPase activity. In Listeria monocytogenes serotype 4b (strain CLIP80459), this protein is DNA mismatch repair protein MutS.